Reading from the N-terminus, the 277-residue chain is Phosphoenolpyruvate synthase regulatory protein (277 aa).

157–164 contributes to the ADP binding site; the sequence is GVSRCGKT.

This sequence belongs to the pyruvate, phosphate/water dikinase regulatory protein family. PSRP subfamily.

The catalysed reaction is [pyruvate, water dikinase] + ADP = [pyruvate, water dikinase]-phosphate + AMP + H(+). The enzyme catalyses [pyruvate, water dikinase]-phosphate + phosphate + H(+) = [pyruvate, water dikinase] + diphosphate. In terms of biological role, bifunctional serine/threonine kinase and phosphorylase involved in the regulation of the phosphoenolpyruvate synthase (PEPS) by catalyzing its phosphorylation/dephosphorylation. The chain is Phosphoenolpyruvate synthase regulatory protein from Escherichia fergusonii (strain ATCC 35469 / DSM 13698 / CCUG 18766 / IAM 14443 / JCM 21226 / LMG 7866 / NBRC 102419 / NCTC 12128 / CDC 0568-73).